We begin with the raw amino-acid sequence, 1007 residues long: Mediator of RNA polymerase II transcription subunit 5 (1007 aa).

This sequence belongs to the Mediator complex subunit 5 family. In terms of assembly, component of the Mediator complex.

It localises to the nucleus. Its function is as follows. Component of the Mediator complex, a coactivator involved in the regulated transcription of nearly all RNA polymerase II-dependent genes. Mediator functions as a bridge to convey information from gene-specific regulatory proteins to the basal RNA polymerase II transcription machinery. Mediator is recruited to promoters by direct interactions with regulatory proteins and serves as a scaffold for the assembly of a functional preinitiation complex with RNA polymerase II and the general transcription factors. The protein is Mediator of RNA polymerase II transcription subunit 5 (nut1) of Aspergillus fumigatus (strain ATCC MYA-4609 / CBS 101355 / FGSC A1100 / Af293) (Neosartorya fumigata).